Reading from the N-terminus, the 359-residue chain is 3-dehydroquinate synthase (359 aa).

NAD(+) is bound by residues 69-74 (DGEQHK), 103-107 (GVIGD), 127-128 (TT), lysine 140, lysine 149, and 167-170 (TLDT). Positions 182, 245, and 262 each coordinate Zn(2+).

This sequence belongs to the sugar phosphate cyclases superfamily. Dehydroquinate synthase family. Co(2+) is required as a cofactor. Zn(2+) serves as cofactor. It depends on NAD(+) as a cofactor.

It localises to the cytoplasm. The enzyme catalyses 7-phospho-2-dehydro-3-deoxy-D-arabino-heptonate = 3-dehydroquinate + phosphate. Its pathway is metabolic intermediate biosynthesis; chorismate biosynthesis; chorismate from D-erythrose 4-phosphate and phosphoenolpyruvate: step 2/7. Catalyzes the conversion of 3-deoxy-D-arabino-heptulosonate 7-phosphate (DAHP) to dehydroquinate (DHQ). In Nitrosococcus oceani (strain ATCC 19707 / BCRC 17464 / JCM 30415 / NCIMB 11848 / C-107), this protein is 3-dehydroquinate synthase.